Consider the following 689-residue polypeptide: MFERNQKTIFVLDHTRYFSIASEEYISMDFLKGKPSADGGATGAAGNATGSGGSQFSKSLWTCACESSIEYCRVVWDLFPGKKHVRFIVSDTAAHIVNTWRPSTQNMAHVMNAMLIVGVPSRNVPTSSDYSVIHGLRAAIEALAEPTDEQLAAMADFGTDELPRIPNKGRVICITSARDNTSMKSLEDIFNTVLVQQNTLAAPPSKKGLVIDHCHLVILNIVPLGVESLVTNRSLLKISPLLDVEIHTVSAPDISYKLTHLILNHYDLASTTVTNIPMKEEQNANSSANYDVEILHSRRAHSITCGPDFSLPTSIKQGATYETVTLKWCTPRGCGSADLQPCLGQFLVTPVDVTSRPSSCLINFLLNGRSVLLEMPRKTGSKATSHMLSARGGEIFVHSLCITRSCMDEAPSITDGPGGRVSDYRTAELGQLIKMSRVVPLKVKDPSAPPLTRRLPRYFPLTTSSSILFHLQRHISWLPHFLHLLVKEDMDKQDEVRCQQHIHELYKSASRGDVLPFTHTNGARLKLSKAKDQYRLLYRELEQLIQLNATTMHHKNLLESLQSLRAAYGDAPLKSEPGASLLRTYTESPLSPERLEPISSVGASGSSSSNSLLKASKRRMSSCGQRSLLDIISSAERSQSNKRLDFSGRLCTPLGQVAKLYPDFGTKDKDTVTTGASITPNVKEESVRS.

Positions N521–T550 form a coiled coil. 2 disordered regions span residues P592–R619 and G665–S689. Low complexity predominate over residues S599–K614. The Nuclear localization signal (NLS) signature appears at L613 to R619.

The protein belongs to the Integrator subunit 13 family. As to quaternary structure, belongs to the multiprotein complex Integrator, at least composed of IntS1, IntS2, IntS3, IntS4, omd/IntS5, IntS6, defl/IntS7, IntS8, IntS9, IntS10, IntS11, IntS12, asun/IntS13, IntS14 and IntS15. The core complex associates with protein phosphatase 2A subunits mts/PP2A and Pp2A-29B, to form the Integrator-PP2A (INTAC) complex. In terms of processing, phosphorylated. Expressed in nurse cells at stages 9-10 of oogenesis and exported to the oocyte. Also expressed in the follicle cells surrounding the oocyte.

The protein localises to the nucleus. The protein resides in the cytoplasm. Its subcellular location is the perinuclear region. Functionally, component of the integrator complex, a multiprotein complex that terminates RNA polymerase II (Pol II) transcription in the promoter-proximal region of genes. The integrator complex provides a quality checkpoint during transcription elongation by driving premature transcription termination of transcripts that are unfavorably configured for transcriptional elongation: the complex terminates transcription by (1) catalyzing dephosphorylation of the C-terminal domain (CTD) of Pol II subunit Polr2A/Rbp1 and Spt5, and (2) degrading the exiting nascent RNA transcript via endonuclease activity. The integrator complex is also involved in the 3'-end processing of the U7 snRNA, and also the spliceosomal snRNAs U1, U2, U4 and U5. Plays a role as a regulator of spermatogenesis. Crucial regulator of the mitotic cell cycle and development. Required for the correct dynein-dynactin perinuclear localization important for nucleus-centrosome coupling that occur upon meiotic progression of primary spermatocytes. Plays a role in sperm motility and fertility. May have a role in the PNG/PLU/GNU pathway. The polypeptide is Protein asunder (Drosophila melanogaster (Fruit fly)).